We begin with the raw amino-acid sequence, 212 residues long: MPLNEIIPVIENLISRGYIKKQSVIDAILSVPRHKFISKSMESYAYVDSPLEIGYGQTISAIHMVGIMCEELDLDEGQNVLEVGTGSGYHAAVVSKIVGESGKVTTIERIPELFENSKKTLSELGYNNVEVVLGDGTKGYLENAPYDRIYVTASGPDVPKALFKQLNDGGILLAPVGAHFQTLMRYTKINGSISEEKLLEVAFVPLIGENGF.

Residue Ser60 is part of the active site.

The protein belongs to the methyltransferase superfamily. L-isoaspartyl/D-aspartyl protein methyltransferase family.

The protein localises to the cytoplasm. The enzyme catalyses [protein]-L-isoaspartate + S-adenosyl-L-methionine = [protein]-L-isoaspartate alpha-methyl ester + S-adenosyl-L-homocysteine. In terms of biological role, catalyzes the methyl esterification of L-isoaspartyl residues in peptides and proteins that result from spontaneous decomposition of normal L-aspartyl and L-asparaginyl residues. It plays a role in the repair and/or degradation of damaged proteins. This is Protein-L-isoaspartate O-methyltransferase from Methanococcus maripaludis (strain DSM 14266 / JCM 13030 / NBRC 101832 / S2 / LL).